The primary structure comprises 185 residues: dCTP deaminase (185 aa).

Residues 107 to 112, 131 to 133, Gln-152, Tyr-166, and Gln-176 each bind dCTP; these read KSTYAR and TLE. The Proton donor/acceptor role is filled by Glu-133.

Belongs to the dCTP deaminase family. As to quaternary structure, homotrimer.

It catalyses the reaction dCTP + H2O + H(+) = dUTP + NH4(+). It functions in the pathway pyrimidine metabolism; dUMP biosynthesis; dUMP from dCTP (dUTP route): step 1/2. Its function is as follows. Catalyzes the deamination of dCTP to dUTP. The protein is dCTP deaminase of Anaplasma marginale (strain Florida).